We begin with the raw amino-acid sequence, 301 residues long: Galectin-6 (301 aa).

Galectin domains are found at residues 19–149 and 173–301; these read YKRP…INFF and YVGA…YVHI.

This is Galectin-6 (Lgals6) from Mus musculus (Mouse).